The following is a 566-amino-acid chain: MSGVGGESVHLRRSSTTATTTGSSKSSLNISKSVSPTGNKAVSPMSSPNSLQSGATPTIAQLQSLLKQQQQPNHSITTNNNNNKSVSVEIDDLKSQLQHSNINDTFNEDEEIEEVTDEVIINHDYHSSEDEYEDDEDEDENNNSVNNNSNNNSNNNNNNNTSISSAHSCESIAEEEELTASPILSRQYSYTIGHGTKPDVVLSIGGGFHSSPRSNRSESTIVHEDDLTNQNDKVINAKDKISSDYKRMMEDPEAFRNEKLKQRKSKFFTKKDLEEIPFNPSSGTQLRSTLFQQFMNEKIQMISENPEKYKSELMKFYKQNLKPQVPKSPQSSGSLSTHSDKLKTSSSLQRSRSVSQPPVVTGNSKNAIGSLDTILEKERKRDGNQDRQLPILFTKCVDFLSNDEALKTEGLFRVAGNSSEVEDLMKSILLYGSDIPSNCCYHVVSNMLKKFLRQLSTPVFTFKYHNDFIQTMKLNNDEERIKAIKEILKLIPPVNQLLIKELMKFLVKVTSFSNVNMMHAHNLGLMFGPNMLKAPSDSEMNAISMLDAGNQVITLLIENYNLFYDN.

Disordered stretches follow at residues 1 to 56 (MSGV…SGAT), 65 to 84 (LLKQQQQPNHSITTNNNNNK), 128 to 168 (SEDE…SAHS), and 322 to 366 (KPQV…NSKN). The segment covering 14–35 (SSTTATTTGSSKSSLNISKSVS) has biased composition (low complexity). A compositionally biased stretch (polar residues) spans 36-56 (PTGNKAVSPMSSPNSLQSGAT). The span at 65-83 (LLKQQQQPNHSITTNNNNN) shows a compositional bias: low complexity. Over residues 130 to 141 (DEYEDDEDEDEN) the composition is skewed to acidic residues. Positions 142 to 160 (NNSVNNNSNNNSNNNNNNN) are enriched in low complexity. Over residues 327–337 (KSPQSSGSLST) the composition is skewed to polar residues. Residues 345 to 356 (SSSLQRSRSVSQ) show a composition bias toward low complexity. In terms of domain architecture, Rho-GAP spans 369 to 564 (GSLDTILEKE…LLIENYNLFY (196 aa)).

It is found in the cytoplasm. Its function is as follows. Rho GTPase-activating protein involved in the signal transduction pathway. The protein is Rho GTPase-activating protein gacH (gacH) of Dictyostelium discoideum (Social amoeba).